Reading from the N-terminus, the 202-residue chain is Alpha-S1-casein (202 aa).

2 disordered regions span residues 1–25 (RPKL…VLKE) and 51–84 (LKEK…VVPI). 2 stretches are compositionally biased toward basic and acidic residues: residues 16-25 (QDSREKVLKE) and 51-63 (LKEK…KEYL). Serine 18 bears the Phosphoserine mark. Over residues 70–80 (QESSSTSSSEE) the composition is skewed to low complexity. 6 positions are modified to phosphoserine: serine 72, serine 73, serine 74, serine 76, serine 77, and serine 78.

It belongs to the alpha-casein family. As to expression, mammary gland specific. Secreted in milk.

Its subcellular location is the secreted. Important role in the capacity of milk to transport calcium phosphate. The chain is Alpha-S1-casein from Equus asinus (Donkey).